The following is a 173-amino-acid chain: Phosphopantetheine adenylyltransferase (173 aa).

A substrate-binding site is contributed by Ser9. ATP is bound by residues Ser9 to Phe10 and His17. Residues Lys41, Thr73, and Arg87 each contribute to the substrate site. ATP contacts are provided by residues Gly88–Arg90, Glu98, and Tyr123–Ser129.

The protein belongs to the bacterial CoaD family. Homohexamer. The cofactor is Mg(2+).

It is found in the cytoplasm. It catalyses the reaction (R)-4'-phosphopantetheine + ATP + H(+) = 3'-dephospho-CoA + diphosphate. It functions in the pathway cofactor biosynthesis; coenzyme A biosynthesis; CoA from (R)-pantothenate: step 4/5. Reversibly transfers an adenylyl group from ATP to 4'-phosphopantetheine, yielding dephospho-CoA (dPCoA) and pyrophosphate. This Limosilactobacillus reuteri (strain DSM 20016) (Lactobacillus reuteri) protein is Phosphopantetheine adenylyltransferase.